A 388-amino-acid polypeptide reads, in one-letter code: MSFNRPPNGVYYIRSAVELRAFVNLLKKFKGYATTLITLYINAERPIPDVVNLLRSEWSTAANIKDKTTRTHVQDTLERIINNLKGEAKAPENGMAVFAGFHMINQGNYEWVYYVVIPPQPINTFKYICDTAFHTELLEDQLHAGVVYGIVVIERGEAVIALLKGGQWEVVKSVEFFVPGKHHAGGQSANRFKRQTEHLAEAFYKMVAEEANKIFLQIPTLKGIIVAGPGPTKEDFLEEGGLDYRLKDKILAIVPACCANEYGVMEAIRNAQEQLKESEYVKAKEVMDKVMYYAVKKSEYLVYGRERALKALEMGIADIIVIAEELGEDAVLEVIMKAEEKGIKVEVVPRGVEESKTLMQAFGGYVALLSTPVWVLEQQLSIAEAAQR.

This sequence belongs to the eukaryotic release factor 1 family. Heterodimer of two subunits, one of which binds GTP.

It localises to the cytoplasm. Its function is as follows. Directs the termination of nascent peptide synthesis (translation) in response to the termination codons UAA, UAG and UGA. The chain is Peptide chain release factor subunit 1 (prf1) from Pyrobaculum aerophilum (strain ATCC 51768 / DSM 7523 / JCM 9630 / CIP 104966 / NBRC 100827 / IM2).